A 407-amino-acid chain; its full sequence is tRNA(Ile2) 2-agmatinylcytidine synthetase TiaS (407 aa).

This sequence belongs to the TiaS family.

It localises to the cytoplasm. The catalysed reaction is cytidine(34) in tRNA(Ile2) + agmatine + ATP + H2O = 2-agmatinylcytidine(34) in tRNA(Ile2) + AMP + 2 phosphate + 2 H(+). ATP-dependent agmatine transferase that catalyzes the formation of 2-agmatinylcytidine (agm2C) at the wobble position (C34) of tRNA(Ile2), converting the codon specificity from AUG to AUA. This Caldivirga maquilingensis (strain ATCC 700844 / DSM 13496 / JCM 10307 / IC-167) protein is tRNA(Ile2) 2-agmatinylcytidine synthetase TiaS.